The following is a 160-amino-acid chain: Crossover junction endodeoxyribonuclease RuvC (160 aa).

Residues Asp-7, Glu-70, and Asp-142 contribute to the active site. Mg(2+) is bound by residues Asp-7, Glu-70, and Asp-142.

Belongs to the RuvC family. As to quaternary structure, homodimer which binds Holliday junction (HJ) DNA. The HJ becomes 2-fold symmetrical on binding to RuvC with unstacked arms; it has a different conformation from HJ DNA in complex with RuvA. In the full resolvosome a probable DNA-RuvA(4)-RuvB(12)-RuvC(2) complex forms which resolves the HJ. The cofactor is Mg(2+).

The protein resides in the cytoplasm. It carries out the reaction Endonucleolytic cleavage at a junction such as a reciprocal single-stranded crossover between two homologous DNA duplexes (Holliday junction).. Its function is as follows. The RuvA-RuvB-RuvC complex processes Holliday junction (HJ) DNA during genetic recombination and DNA repair. Endonuclease that resolves HJ intermediates. Cleaves cruciform DNA by making single-stranded nicks across the HJ at symmetrical positions within the homologous arms, yielding a 5'-phosphate and a 3'-hydroxyl group; requires a central core of homology in the junction. The consensus cleavage sequence is 5'-(A/T)TT(C/G)-3'. Cleavage occurs on the 3'-side of the TT dinucleotide at the point of strand exchange. HJ branch migration catalyzed by RuvA-RuvB allows RuvC to scan DNA until it finds its consensus sequence, where it cleaves and resolves the cruciform DNA. The chain is Crossover junction endodeoxyribonuclease RuvC from Ehrlichia ruminantium (strain Welgevonden).